The primary structure comprises 302 residues: MLVVFKRLGFIVSIFSLTFLSACAAFDKWQEFYINNIPSSTEIHRFNYDLNFSLTFTNRITSNGEAKFSVTYGTGWLIDWKEPDKKKENDPFRAYLATNLHVAASLINPQDYEPYKNKDDAGWTTTFRLGKYTKVSDFVSPNQFGLPNAAQALVNVQTSVIPKTAFAARDFVDYSFPQEQKDKEKRKQQWVKNSHTKNSDVQPFAEFAILEIPLFSKSKVDRKIFNHFIQPAIRTYKQLGDSLNIFANPTLDQLKQNRYYVLGYPFLKNKVSSLFLNQTGKKKGIFRRKYTNIPWKTSYYLN.

The first 22 residues, 1 to 22 (MLVVFKRLGFIVSIFSLTFLSA), serve as a signal peptide directing secretion. A lipid anchor (N-palmitoyl cysteine) is attached at Cys23. Cys23 carries the S-diacylglycerol cysteine lipid modification.

It belongs to the MG067/MG068/MG395 family.

The protein localises to the cell membrane. This is an uncharacterized protein from Mycoplasma pneumoniae (strain ATCC 29342 / M129 / Subtype 1) (Mycoplasmoides pneumoniae).